The primary structure comprises 76 residues: uncharacterized protein (76 aa).

EF-hand domains lie at glutamate 9–asparagine 44 and glutamate 43–serine 76.

The protein resides in the cytoplasm. The protein localises to the nucleus. This is an uncharacterized protein from Schizosaccharomyces pombe (strain 972 / ATCC 24843) (Fission yeast).